We begin with the raw amino-acid sequence, 330 residues long: Ketol-acid reductoisomerase (NADP(+)) (330 aa).

The KARI N-terminal Rossmann domain maps to 2-182; sequence VKVYYDADAN…GCTKAGVFET (181 aa). NADP(+) contacts are provided by residues 25–28, Arg48, Ser51, and 83–86; these read YGSQ and DEIQ. Residue His108 is part of the active site. Gly134 contacts NADP(+). One can recognise a KARI C-terminal knotted domain in the interval 183 to 328; it reads SFREETETDL…ARLREMMPWL (146 aa). Mg(2+) is bound by residues Asp191, Glu195, Glu227, and Glu231. Ser252 serves as a coordination point for substrate.

Belongs to the ketol-acid reductoisomerase family. The cofactor is Mg(2+).

It catalyses the reaction (2R)-2,3-dihydroxy-3-methylbutanoate + NADP(+) = (2S)-2-acetolactate + NADPH + H(+). The enzyme catalyses (2R,3R)-2,3-dihydroxy-3-methylpentanoate + NADP(+) = (S)-2-ethyl-2-hydroxy-3-oxobutanoate + NADPH + H(+). Its pathway is amino-acid biosynthesis; L-isoleucine biosynthesis; L-isoleucine from 2-oxobutanoate: step 2/4. The protein operates within amino-acid biosynthesis; L-valine biosynthesis; L-valine from pyruvate: step 2/4. Functionally, involved in the biosynthesis of branched-chain amino acids (BCAA). Catalyzes an alkyl-migration followed by a ketol-acid reduction of (S)-2-acetolactate (S2AL) to yield (R)-2,3-dihydroxy-isovalerate. In the isomerase reaction, S2AL is rearranged via a Mg-dependent methyl migration to produce 3-hydroxy-3-methyl-2-ketobutyrate (HMKB). In the reductase reaction, this 2-ketoacid undergoes a metal-dependent reduction by NADPH to yield (R)-2,3-dihydroxy-isovalerate. In Desulforamulus reducens (strain ATCC BAA-1160 / DSM 100696 / MI-1) (Desulfotomaculum reducens), this protein is Ketol-acid reductoisomerase (NADP(+)).